The primary structure comprises 161 residues: Nucleotide-binding protein SAR11_0692 (161 aa).

This sequence belongs to the YajQ family.

Its function is as follows. Nucleotide-binding protein. The protein is Nucleotide-binding protein SAR11_0692 of Pelagibacter ubique (strain HTCC1062).